The following is an 823-amino-acid chain: Probable inorganic carbon transporter subunit DabA (823 aa).

Zn(2+) is bound by residues Cys-361, Asp-363, His-527, and Cys-542.

The protein belongs to the inorganic carbon transporter (TC 9.A.2) DabA family. Forms a complex with DabB. The cofactor is Zn(2+).

It localises to the cell inner membrane. Its activity is regulated as follows. Intracellular DIC accumulation is sensitive to CCCP (carbonyl cyanide-m-chlorophenylhydrazone) and DCCD (N,N-dicyclohexylcarbodiimide) and therefore likely driven by either proton potential, ATP, or both. Its function is as follows. Part of an energy-coupled inorganic carbon pump. In terms of biological role, probably involved in transport of dissolved inorganic carbon (DIC) with upstream gene dabB (Tcr_0853); has been suggested to be a proton-DIC symporter. The chain is Probable inorganic carbon transporter subunit DabA from Hydrogenovibrio crunogenus (strain DSM 25203 / XCL-2) (Thiomicrospira crunogena).